The sequence spans 343 residues: C-X-C chemokine receptor type 6 (343 aa).

At 1–33 the chain is on the extracellular side; it reads MAEYDHYEDDEFFNSFNDSSQKEHQDFLQFSKV. N-linked (GlcNAc...) asparagine glycosylation is present at Asn17. Residues 34-60 traverse the membrane as a helical segment; it reads FLPCMYLVVFVCGLVGNSLVLVISIFY. Topologically, residues 61 to 69 are cytoplasmic; the sequence is HKLQSLTDV. A helical membrane pass occupies residues 70-90; the sequence is FLVNLPLADLVFVCTLPFWAY. Residues 91–104 are Extracellular-facing; sequence AGIHEWIFGQVMCK. Residues Cys103 and Cys181 are joined by a disulfide bond. The chain crosses the membrane as a helical span at residues 105–126; it reads TLLGVYTINFYTSMLILTCITV. Over 127–144 the chain is Cytoplasmic; sequence DRFIVVVKATKAYNQQAK. Residues 145–165 traverse the membrane as a helical segment; sequence RMTWGKVICLLIWVISLLVSL. Over 166–188 the chain is Extracellular; sequence PQIIYGNVFNLDKLICRYHDEEI. The helical transmembrane segment at 189 to 216 threads the bilayer; sequence STVVLATQMTLGFFLPLLTMIVCYSVII. At 217–232 the chain is on the cytoplasmic side; that stretch reads KTLLHAGGFQKHRSLK. Residues 233–260 form a helical membrane-spanning segment; the sequence is IIFLVMAVFLLTQTPFNLVKLIRSTHWE. Residues 261–276 lie on the Extracellular side of the membrane; the sequence is YYAMTSFHYTIIVTEA. The chain crosses the membrane as a helical span at residues 277-294; that stretch reads IAYLRACLNPVLYAFVSL. Residues 295 to 343 are Cytoplasmic-facing; the sequence is KFRKNFWKLVKDIGCLPYLGVSHQWKSSEDNSKTFSASHNVEATSMFQL.

This sequence belongs to the G-protein coupled receptor 1 family.

It is found in the cell membrane. Its function is as follows. Receptor for the C-X-C chemokine CXCL16. Used as a coreceptor by SIVs and by strains of HIV-2 and m-tropic HIV-1. This chain is C-X-C chemokine receptor type 6 (CXCR6), found in Cercocebus atys (Sooty mangabey).